Consider the following 158-residue polypeptide: MAKATVVKKHNGGTIAQNKRARHDYFIEEKFEAGMSLLGWEVKSLRAGRMSLTESYVIFKNGEAFLFGAQIQPLLSASTHIVPEATRTRKLLLSRRELEKLMGAVNQKGYSCVPLACYWKGHLVKLEIALVKGKQLHDKRATEKERDWQRDKARIFHK.

Belongs to the SmpB family.

The protein resides in the cytoplasm. Required for rescue of stalled ribosomes mediated by trans-translation. Binds to transfer-messenger RNA (tmRNA), required for stable association of tmRNA with ribosomes. tmRNA and SmpB together mimic tRNA shape, replacing the anticodon stem-loop with SmpB. tmRNA is encoded by the ssrA gene; the 2 termini fold to resemble tRNA(Ala) and it encodes a 'tag peptide', a short internal open reading frame. During trans-translation Ala-aminoacylated tmRNA acts like a tRNA, entering the A-site of stalled ribosomes, displacing the stalled mRNA. The ribosome then switches to translate the ORF on the tmRNA; the nascent peptide is terminated with the 'tag peptide' encoded by the tmRNA and targeted for degradation. The ribosome is freed to recommence translation, which seems to be the essential function of trans-translation. This is SsrA-binding protein from Acinetobacter baumannii (strain AB307-0294).